We begin with the raw amino-acid sequence, 517 residues long: Pseudaminic acid cytidylyltransferase and UDP-2,4-diacetamido-2,4,6-trideoxy-beta-L-altropyranose hydrolase (517 aa).

Residues 1 to 208 (MRAIAIVLAR…ELSPLEVQDI (208 aa)) are pseudaminic acid cytidylyltransferase. The segment at 209-517 (AHFRRFRISQ…EGALREFLEI (309 aa)) is UDP-2,4-diacetamido-2,4,6-trideoxy-beta-L-altropyranose hydrolase. Histidine 244 functions as the Proton acceptor; for UDP-2,4-diacetamido-2,4,6-trideoxy-beta-L-altropyranose hydrolase activity in the catalytic mechanism.

The protein in the N-terminal section; belongs to the CMP-NeuNAc synthase family. In the C-terminal section; belongs to the PseG family. As to quaternary structure, monomer. Mg(2+) serves as cofactor.

It catalyses the reaction UDP-2,4-diacetamido-2,4,6-trideoxy-beta-L-altrose + H2O = 2,4-diacetamido-2,4,6-trideoxy-beta-L-altrose + UDP + H(+). The enzyme catalyses pseudaminate + CTP = CMP-pseudaminate + diphosphate. In terms of biological role, catalyzes the fourth and sixth steps in the biosynthesis of pseudaminic acid, a sialic-acid-like sugar that is used to modify flagellin. The C-terminus mediates the fourth step of the pathway and catalyzes the removal of UDP from C-1 of UDP-2,4-diacetamido-2,4,6-trideoxy-beta-L-altropyranose forming 2,4-diacetamido-2,4,6-trideoxy-beta-L-altropyranose. The N-terminal part mediates the last step of the pathway by mediating activation of pseudaminic acid with CMP by forming CMP-pseudaminic acid. The sequence is that of Pseudaminic acid cytidylyltransferase and UDP-2,4-diacetamido-2,4,6-trideoxy-beta-L-altropyranose hydrolase from Helicobacter pylori (strain ATCC 700392 / 26695) (Campylobacter pylori).